The sequence spans 496 residues: Tripartite motif-containing protein 30A (496 aa).

The RING-type zinc-finger motif lies at 15 to 59 (CPICLELLKEPVSADCNHSFCRACITLNYESNRNTDGKGNCPVCR). Residues 91–132 (QKVNICAQHGEKLRLFCRKDMMVICWLCERSQEHRGHQTALI) form a B box-type zinc finger. Zn(2+) contacts are provided by cysteine 96, histidine 99, cysteine 118, and histidine 124. Residues 173–239 (NQIQINVENV…RDLISDVEHH (67 aa)) are a coiled coil. The interval 205–210 (KKEKKE) is highly hydrophilic. Residues 268–276 (TVPQKRKRT) carry the Nuclear localization signal motif. One can recognise a B30.2/SPRY domain in the interval 281 to 496 (DLKGMLQVYQ…EPMTICGPPS (216 aa)).

As to quaternary structure, homomultimer. Interacts with NR2C2/TAK1, TAB2 and TAB3. Does not interact with NLRP3, NLRC4 or TAB1. In terms of tissue distribution, highly expressed in spleen and lymph nodes (at protein level).

It localises to the cytoplasm. Its subcellular location is the nucleus. Its function is as follows. Trans-acting factor that regulates gene expression of interleukin 2 receptor alpha chain. May affect IL2R-alpha expression through cis-acting negative regulatory elements or through competition with proteins that bind to enhancer or activator sequences. Negatively regulates Toll-like receptor (TLR)-mediated activation of NFKB by promoting degradation of TAB2 and TAB3 and preventing TRAF6 autoubiquitination. Negatively regulates production of reactive oxygen species (ROS) which inhibits activation of the NLRP3 inflammasome complex. This, in turn, regulates activation of CASP1 and subsequent cleavage of IL1B and IL18. No activity detected against a range of retroviruses including a number of lentiviruses, gammaretroviruses and betaretroviruses. The protein is Tripartite motif-containing protein 30A (Trim30a) of Mus musculus (Mouse).